Consider the following 344-residue polypeptide: RNA 3'-terminal phosphate cyclase (344 aa).

Residues Gln-102 and Phe-284 to Gln-288 each bind ATP. Catalysis depends on His-308, which acts as the Tele-AMP-histidine intermediate.

It belongs to the RNA 3'-terminal cyclase family. Type 1 subfamily.

It is found in the cytoplasm. It carries out the reaction a 3'-end 3'-phospho-ribonucleotide-RNA + ATP = a 3'-end 2',3'-cyclophospho-ribonucleotide-RNA + AMP + diphosphate. Functionally, catalyzes the conversion of 3'-phosphate to a 2',3'-cyclic phosphodiester at the end of RNA. The mechanism of action of the enzyme occurs in 3 steps: (A) adenylation of the enzyme by ATP; (B) transfer of adenylate to an RNA-N3'P to produce RNA-N3'PP5'A; (C) and attack of the adjacent 2'-hydroxyl on the 3'-phosphorus in the diester linkage to produce the cyclic end product. The biological role of this enzyme is unknown but it is likely to function in some aspects of cellular RNA processing. In Thermococcus gammatolerans (strain DSM 15229 / JCM 11827 / EJ3), this protein is RNA 3'-terminal phosphate cyclase.